A 132-amino-acid chain; its full sequence is Small ribosomal subunit protein uS9 (132 aa).

The protein belongs to the universal ribosomal protein uS9 family.

The polypeptide is Small ribosomal subunit protein uS9 (Blochmanniella pennsylvanica (strain BPEN)).